The chain runs to 423 residues: Gamma-glutamyl phosphate reductase (423 aa).

This sequence belongs to the gamma-glutamyl phosphate reductase family.

It localises to the cytoplasm. The catalysed reaction is L-glutamate 5-semialdehyde + phosphate + NADP(+) = L-glutamyl 5-phosphate + NADPH + H(+). Its pathway is amino-acid biosynthesis; L-proline biosynthesis; L-glutamate 5-semialdehyde from L-glutamate: step 2/2. Functionally, catalyzes the NADPH-dependent reduction of L-glutamate 5-phosphate into L-glutamate 5-semialdehyde and phosphate. The product spontaneously undergoes cyclization to form 1-pyrroline-5-carboxylate. This is Gamma-glutamyl phosphate reductase from Paracoccus denitrificans (strain Pd 1222).